The following is a 157-amino-acid chain: Large ribosomal subunit protein bL17 (157 aa).

A disordered region spans residues 124–157 (AAPVVSKQDRAKRVKGSKKAESRSQENEGGDAAE).

It belongs to the bacterial ribosomal protein bL17 family. Part of the 50S ribosomal subunit. Contacts protein L32.

This Chlorobaculum tepidum (strain ATCC 49652 / DSM 12025 / NBRC 103806 / TLS) (Chlorobium tepidum) protein is Large ribosomal subunit protein bL17.